Reading from the N-terminus, the 221-residue chain is 7-cyano-7-deazaguanine synthase (221 aa).

Position 10 to 20 (10 to 20 (FSGGQDSTTCL)) interacts with ATP. Residues Cys186, Cys195, Cys198, and Cys201 each coordinate Zn(2+).

It belongs to the QueC family. In terms of assembly, homodimer. Zn(2+) serves as cofactor.

It carries out the reaction 7-carboxy-7-deazaguanine + NH4(+) + ATP = 7-cyano-7-deazaguanine + ADP + phosphate + H2O + H(+). The protein operates within purine metabolism; 7-cyano-7-deazaguanine biosynthesis. Its function is as follows. Catalyzes the ATP-dependent conversion of 7-carboxy-7-deazaguanine (CDG) to 7-cyano-7-deazaguanine (preQ(0)). The polypeptide is 7-cyano-7-deazaguanine synthase (Geobacillus sp. (strain WCH70)).